The following is a 370-amino-acid chain: MSFAPLQNDTFLRACRRQATDYTPLWLMRQAGRYLPEYKATRAKAGSFMGLATNVEYATEVTLQPLERFPLDAAILFSDILTVPDAMGLGLSFAEGEGPRFAKAVRDEADVAALAVPDLDKLRYVFDAVTSIRRALNGRVPLIGFSGSPWTLACYMVEGKGSDDYRLVKTLMYSRPDLMHRILAVNADAVAAYLNAQIDAGAQAVMVFDSWGGVLADGCFQQFSLEYTRRVLAQLKRTGVDGQDVPRIVFTKGGGIWLDDMKDIDCEVLGLDWTAHLGKARAIVGGQVGGPGKALQGNIDPNVLFAPPEAVAAQVRAVLDSFGTPHTDKTTTGPTHIFNLGHGISQFTPPEHVAALVEAVHGYSRSLRQR.

Substrate-binding positions include 29 to 33 (RQAGR), D79, Y155, S210, and H342.

It belongs to the uroporphyrinogen decarboxylase family. Homodimer.

It localises to the cytoplasm. It carries out the reaction uroporphyrinogen III + 4 H(+) = coproporphyrinogen III + 4 CO2. Its pathway is porphyrin-containing compound metabolism; protoporphyrin-IX biosynthesis; coproporphyrinogen-III from 5-aminolevulinate: step 4/4. Its function is as follows. Catalyzes the decarboxylation of four acetate groups of uroporphyrinogen-III to yield coproporphyrinogen-III. This is Uroporphyrinogen decarboxylase from Acidovorax sp. (strain JS42).